The primary structure comprises 378 residues: Erythronate-4-phosphate dehydrogenase (378 aa).

Positions 45 and 66 each coordinate substrate. The NAD(+) site is built by Asp-146 and Thr-175. Arg-208 is a catalytic residue. Asp-232 is an NAD(+) binding site. Residue Glu-237 is part of the active site. His-254 acts as the Proton donor in catalysis. Gly-257 provides a ligand contact to NAD(+). Tyr-258 contributes to the substrate binding site.

It belongs to the D-isomer specific 2-hydroxyacid dehydrogenase family. PdxB subfamily. In terms of assembly, homodimer.

It is found in the cytoplasm. It catalyses the reaction 4-phospho-D-erythronate + NAD(+) = (R)-3-hydroxy-2-oxo-4-phosphooxybutanoate + NADH + H(+). It functions in the pathway cofactor biosynthesis; pyridoxine 5'-phosphate biosynthesis; pyridoxine 5'-phosphate from D-erythrose 4-phosphate: step 2/5. In terms of biological role, catalyzes the oxidation of erythronate-4-phosphate to 3-hydroxy-2-oxo-4-phosphonooxybutanoate. The polypeptide is Erythronate-4-phosphate dehydrogenase (Escherichia coli O6:K15:H31 (strain 536 / UPEC)).